The following is a 133-amino-acid chain: Holo-[acyl-carrier-protein] synthase (133 aa).

Mg(2+) contacts are provided by D8 and E56.

The protein belongs to the P-Pant transferase superfamily. AcpS family. Mg(2+) serves as cofactor.

Its subcellular location is the cytoplasm. The catalysed reaction is apo-[ACP] + CoA = holo-[ACP] + adenosine 3',5'-bisphosphate + H(+). Its function is as follows. Transfers the 4'-phosphopantetheine moiety from coenzyme A to a Ser of acyl-carrier-protein. This Deinococcus radiodurans (strain ATCC 13939 / DSM 20539 / JCM 16871 / CCUG 27074 / LMG 4051 / NBRC 15346 / NCIMB 9279 / VKM B-1422 / R1) protein is Holo-[acyl-carrier-protein] synthase.